Reading from the N-terminus, the 367-residue chain is Glutamate 5-kinase (367 aa).

Residue Lys10 coordinates ATP. 3 residues coordinate substrate: Ser50, Asp137, and Asn149. ATP contacts are provided by residues 169–170 (TD) and 211–217 (TGGMGTK). One can recognise a PUA domain in the interval 275-353 (AGEITVDEGA…QQIDAILGYE (79 aa)).

This sequence belongs to the glutamate 5-kinase family.

It is found in the cytoplasm. It carries out the reaction L-glutamate + ATP = L-glutamyl 5-phosphate + ADP. It functions in the pathway amino-acid biosynthesis; L-proline biosynthesis; L-glutamate 5-semialdehyde from L-glutamate: step 1/2. Catalyzes the transfer of a phosphate group to glutamate to form L-glutamate 5-phosphate. This is Glutamate 5-kinase from Cronobacter sakazakii (strain ATCC BAA-894) (Enterobacter sakazakii).